The primary structure comprises 129 residues: Small ribosomal subunit protein uS8 (129 aa).

This sequence belongs to the universal ribosomal protein uS8 family. Part of the 30S ribosomal subunit. Contacts proteins S5 and S12.

One of the primary rRNA binding proteins, it binds directly to 16S rRNA central domain where it helps coordinate assembly of the platform of the 30S subunit. This is Small ribosomal subunit protein uS8 from Mycoplasma mycoides subsp. mycoides SC (strain CCUG 32753 / NCTC 10114 / PG1).